We begin with the raw amino-acid sequence, 126 residues long: Large ribosomal subunit protein bL17 (126 aa).

The protein belongs to the bacterial ribosomal protein bL17 family. In terms of assembly, part of the 50S ribosomal subunit. Contacts protein L32.

This is Large ribosomal subunit protein bL17 from Aliivibrio salmonicida (strain LFI1238) (Vibrio salmonicida (strain LFI1238)).